The sequence spans 653 residues: DNA mismatch repair protein MutL (653 aa).

Residues 368 to 413 are disordered; that stretch reads EVSQVAEPEGKTDITNKKETETKEKAEKKENKQEEKEEKTSAPEYV. The segment covering 375 to 408 has biased composition (basic and acidic residues); it reads PEGKTDITNKKETETKEKAEKKENKQEEKEEKTS.

Belongs to the DNA mismatch repair MutL/HexB family.

Its function is as follows. This protein is involved in the repair of mismatches in DNA. It is required for dam-dependent methyl-directed DNA mismatch repair. May act as a 'molecular matchmaker', a protein that promotes the formation of a stable complex between two or more DNA-binding proteins in an ATP-dependent manner without itself being part of a final effector complex. The polypeptide is DNA mismatch repair protein MutL (Lactobacillus delbrueckii subsp. bulgaricus (strain ATCC 11842 / DSM 20081 / BCRC 10696 / JCM 1002 / NBRC 13953 / NCIMB 11778 / NCTC 12712 / WDCM 00102 / Lb 14)).